Here is a 601-residue protein sequence, read N- to C-terminus: Elongation factor 4 (601 aa).

Positions 6-188 (AHIRNFSIIA…QIVRKVPPPK (183 aa)) constitute a tr-type G domain. Residues 18–23 (DHGKST) and 135–138 (NKVD) each bind GTP.

This sequence belongs to the TRAFAC class translation factor GTPase superfamily. Classic translation factor GTPase family. LepA subfamily.

It is found in the cell inner membrane. The catalysed reaction is GTP + H2O = GDP + phosphate + H(+). Required for accurate and efficient protein synthesis under certain stress conditions. May act as a fidelity factor of the translation reaction, by catalyzing a one-codon backward translocation of tRNAs on improperly translocated ribosomes. Back-translocation proceeds from a post-translocation (POST) complex to a pre-translocation (PRE) complex, thus giving elongation factor G a second chance to translocate the tRNAs correctly. Binds to ribosomes in a GTP-dependent manner. The sequence is that of Elongation factor 4 from Anaeromyxobacter sp. (strain Fw109-5).